Here is a 363-residue protein sequence, read N- to C-terminus: Biotin synthase (363 aa).

Residues Asn-38–Arg-266 form the Radical SAM core domain. [4Fe-4S] cluster-binding residues include Cys-53, Cys-57, and Cys-60. Residues Cys-97, Cys-129, Cys-189, and Arg-261 each coordinate [2Fe-2S] cluster. The segment at Lys-315 to Ala-363 is disordered. Over residues Ala-316–Leu-353 the composition is skewed to basic and acidic residues. Positions Glu-354–Ala-363 are enriched in polar residues.

This sequence belongs to the radical SAM superfamily. Biotin synthase family. As to quaternary structure, homodimer. Requires [4Fe-4S] cluster as cofactor. The cofactor is [2Fe-2S] cluster.

It carries out the reaction (4R,5S)-dethiobiotin + (sulfur carrier)-SH + 2 reduced [2Fe-2S]-[ferredoxin] + 2 S-adenosyl-L-methionine = (sulfur carrier)-H + biotin + 2 5'-deoxyadenosine + 2 L-methionine + 2 oxidized [2Fe-2S]-[ferredoxin]. It participates in cofactor biosynthesis; biotin biosynthesis; biotin from 7,8-diaminononanoate: step 2/2. Catalyzes the conversion of dethiobiotin (DTB) to biotin by the insertion of a sulfur atom into dethiobiotin via a radical-based mechanism. The sequence is that of Biotin synthase from Christiangramia forsetii (strain DSM 17595 / CGMCC 1.15422 / KT0803) (Gramella forsetii).